Reading from the N-terminus, the 465-residue chain is Ran-binding protein 3-like (465 aa).

Residues 276–417 (SQPSRKCLLE…ALQSFNKQRD (142 aa)) enclose the RanBD1 domain.

Interacts with SMAD1, SMAD5 and SMAD8; the interaction (with SMAD at least) increases when SMAD1 is not phosphorylated and mediates SMAD1 nuclear export.

Its subcellular location is the nucleus. It localises to the cytoplasm. Functionally, nuclear export factor for BMP-specific SMAD1/5/8 that plays a critical role in terminating BMP signaling and regulating mesenchymal stem cell differentiation by blocking osteoblast differentiation to promote myogenic differention. Directly recognizes dephosphorylated SMAD1/5/8 and mediates their nuclear export in a Ran-dependent manner. The protein is Ran-binding protein 3-like (RANBP3L) of Homo sapiens (Human).